A 551-amino-acid chain; its full sequence is Chaperonin GroEL (551 aa).

ATP-binding positions include 30 to 33 (TLGP), Lys51, 87 to 91 (DGTTT), Gly415, 481 to 483 (NAA), and Asp497.

This sequence belongs to the chaperonin (HSP60) family. As to quaternary structure, forms a cylinder of 14 subunits composed of two heptameric rings stacked back-to-back. Interacts with the co-chaperonin GroES.

It is found in the cytoplasm. It carries out the reaction ATP + H2O + a folded polypeptide = ADP + phosphate + an unfolded polypeptide.. In terms of biological role, together with its co-chaperonin GroES, plays an essential role in assisting protein folding. The GroEL-GroES system forms a nano-cage that allows encapsulation of the non-native substrate proteins and provides a physical environment optimized to promote and accelerate protein folding. In Magnetococcus marinus (strain ATCC BAA-1437 / JCM 17883 / MC-1), this protein is Chaperonin GroEL.